A 290-amino-acid polypeptide reads, in one-letter code: MASITLTPSEKDIQAFLEHYQTSLAPSKNPYIRYFLKLPQATVSIYTSGKILLQGEGAEKYASFFGYQAVEQTSGQNLPLIGTDEVGNGSYFGGLAVVAAFVTPDQHDFLRKLGVGDSKTLTDQKIRQIAPILKEKIQHQALLLSPSKYNEVIGDRYNAVSVKVALHNQAIYLLLQKGVQPEKIVIDAFTSAKNYDKYLAQETNRFSNPISLEEKAEGKYLAVAVSSVIARDLFLENLENLGRELGYQLPSGAGTASDKVASQILQAYGMQGLNFCAKLHFKNTEKAKNA.

The 213-residue stretch at L78–A290 folds into the RNase H type-2 domain. Residues D84, E85, and D187 each contribute to the a divalent metal cation site.

It belongs to the RNase HII family. RnhC subfamily. Requires Mn(2+) as cofactor. Mg(2+) serves as cofactor.

It localises to the cytoplasm. The enzyme catalyses Endonucleolytic cleavage to 5'-phosphomonoester.. In terms of biological role, endonuclease that specifically degrades the RNA of RNA-DNA hybrids. The protein is Ribonuclease HIII of Streptococcus pneumoniae serotype 2 (strain D39 / NCTC 7466).